The primary structure comprises 573 residues: Transcription factor E3 (573 aa).

Serine 47 carries the post-translational modification Phosphoserine; by MTOR. The disordered stretch occupies residues 91–151; it reads TLSASSSAEG…SPAPASPAIS (61 aa). Residues 107–126 are compositionally biased toward low complexity; the sequence is SSSSSSRVLLRQQLMRAQAQ. The span at 127-136 shows a compositional bias: basic and acidic residues; sequence EQERRERREQ. Low complexity predominate over residues 137 to 151; that stretch reads ASSFPSPAPASPAIS. An Asymmetric dimethylarginine modification is found at arginine 186. Residues 209-248 form a disordered region; it reads LASQALTPPPGGASVQPLPTPEAAHAPGPTSSAPNSPMAL. Positions 258–269 are strong transcription activation domain; the sequence is EIDDVIDEIISL. A Phosphoserine; by MTOR modification is found at serine 319. A Glycyl lysine isopeptide (Lys-Gly) (interchain with G-Cter in SUMO2) cross-link involves residue lysine 337. Positions 344–397 constitute a bHLH domain; sequence QKKDNHNLIERRRRFNINDRIKELGTLIPKSSDPEMRWNKGTILKASVDYIRKL. Residues 354–357 carry the Nuclear localization signal motif; the sequence is RRRR. Positions 407-428 are leucine-zipper; that stretch reads LESRQRSLEQANRSLQLRIQEL. The tract at residues 531 to 573 is disordered; that stretch reads VGGLSGGTLSPLRAASDPLLSSVSPAVSKASSRRSSFSMEEES. The segment covering 537 to 573 has biased composition (low complexity); sequence GTLSPLRAASDPLLSSVSPAVSKASSRRSSFSMEEES. Phosphoserine is present on residues serine 540, serine 546, serine 552, serine 554, serine 558, and serine 566.

Belongs to the MiT/TFE family. As to quaternary structure, homodimer and heterodimer; with TFEB or MITF. Interacts with RRAGC/RagC GDP-bound and RRAGD/RagD GDP-bound; promoting its recruitment to lysosomal membrane in the presence of nutrients. Post-translationally, phosphorylation ar Ser-47 and Ser-319 by MTOR via non-canonical mTORC1 pathway regulates its stability and subcellular location, respectively. When nutrients are present, phosphorylation by MTOR at Ser-47 promotes ubiquitination by the SCF(BTRC) complex, followed by degradation. When nutrients are present, phosphorylation by MTOR at Ser-319 also promotes association with 14-3-3/YWHA adapters and retention in the cytosol. Phosphorylation at Ser-47 plays a more critical role than phosphorylation at Ser-319 for TFE3 inactivation. Inhibition of mTORC1, starvation and lysosomal disruption, promotes dephosphorylation and transcription factor activity. Ubiquitinated by the SCF(BTRC) and SCF(FBXW11) complexes following phosphorylation at Ser-47 by MTOR, leading to its degradation by the proteasome. In terms of processing, sumoylated; does not affect dimerization with MITF.

The protein resides in the cytoplasm. It is found in the cytosol. The protein localises to the nucleus. Its subcellular location is the lysosome membrane. Its function is as follows. Transcription factor that acts as a master regulator of lysosomal biogenesis and immune response. Specifically recognizes and binds E-box sequences (5'-CANNTG-3'); efficient DNA-binding requires dimerization with itself or with another MiT/TFE family member such as TFEB or MITF. Involved in the cellular response to amino acid availability by acting downstream of MTOR: in the presence of nutrients, TFE3 phosphorylation by MTOR promotes its inactivation. Upon starvation or lysosomal stress, inhibition of MTOR induces TFE3 dephosphorylation, resulting in transcription factor activity. Specifically recognizes and binds the CLEAR-box sequence (5'-GTCACGTGAC-3') present in the regulatory region of many lysosomal genes, leading to activate their expression, thereby playing a central role in expression of lysosomal genes. Maintains the pluripotent state of embryonic stem cells by promoting the expression of genes such as ESRRB; mTOR-dependent TFE3 cytosolic retention and inactivation promotes exit from pluripotency. Required to maintain the naive pluripotent state of hematopoietic stem cell; mTOR-dependent cytoplasmic retention of TFE3 promotes the exit of hematopoietic stem cell from pluripotency. TFE3 activity is also involved in the inhibition of neuronal progenitor differentiation. Acts as a positive regulator of browning of adipose tissue by promoting expression of target genes; mTOR-dependent phosphorylation promotes cytoplasmic retention of TFE3 and inhibits browning of adipose tissue. In association with TFEB, activates the expression of CD40L in T-cells, thereby playing a role in T-cell-dependent antibody responses in activated CD4(+) T-cells and thymus-dependent humoral immunity. Specifically recognizes the MUE3 box, a subset of E-boxes, present in the immunoglobulin enhancer. It also binds very well to a USF/MLTF site. May regulate lysosomal positioning in response to nutrient deprivation by promoting the expression of PIP4P1. In Bos taurus (Bovine), this protein is Transcription factor E3.